Reading from the N-terminus, the 123-residue chain is Small ribosomal subunit protein uS12 (123 aa).

Residues 1–22 form a disordered region; it reads MATINQLVRKPRKRKAKTSDVR. Asp-89 carries the 3-methylthioaspartic acid modification. The interval 101-123 is disordered; the sequence is ALDTSGVNDRKRGRSKYGTKRPK. Positions 111 to 123 are enriched in basic residues; it reads KRGRSKYGTKRPK.

This sequence belongs to the universal ribosomal protein uS12 family. Part of the 30S ribosomal subunit. Contacts proteins S8 and S17. May interact with IF1 in the 30S initiation complex.

In terms of biological role, with S4 and S5 plays an important role in translational accuracy. Interacts with and stabilizes bases of the 16S rRNA that are involved in tRNA selection in the A site and with the mRNA backbone. Located at the interface of the 30S and 50S subunits, it traverses the body of the 30S subunit contacting proteins on the other side and probably holding the rRNA structure together. The combined cluster of proteins S8, S12 and S17 appears to hold together the shoulder and platform of the 30S subunit. This chain is Small ribosomal subunit protein uS12, found in Teredinibacter turnerae (strain ATCC 39867 / T7901).